Here is a 400-residue protein sequence, read N- to C-terminus: CCA-adding enzyme (400 aa).

2 residues coordinate ATP: glycine 28 and arginine 31. The CTP site is built by glycine 28 and arginine 31. Positions 41 and 43 each coordinate Mg(2+). 5 residues coordinate ATP: arginine 112, aspartate 155, arginine 158, arginine 161, and arginine 164. Positions 112, 155, 158, 161, and 164 each coordinate CTP.

The protein belongs to the tRNA nucleotidyltransferase/poly(A) polymerase family. Bacterial CCA-adding enzyme type 3 subfamily. In terms of assembly, homodimer. Mg(2+) serves as cofactor.

It carries out the reaction a tRNA precursor + 2 CTP + ATP = a tRNA with a 3' CCA end + 3 diphosphate. The catalysed reaction is a tRNA with a 3' CCA end + 2 CTP + ATP = a tRNA with a 3' CCACCA end + 3 diphosphate. Its function is as follows. Catalyzes the addition and repair of the essential 3'-terminal CCA sequence in tRNAs without using a nucleic acid template. Adds these three nucleotides in the order of C, C, and A to the tRNA nucleotide-73, using CTP and ATP as substrates and producing inorganic pyrophosphate. tRNA 3'-terminal CCA addition is required both for tRNA processing and repair. Also involved in tRNA surveillance by mediating tandem CCA addition to generate a CCACCA at the 3' terminus of unstable tRNAs. While stable tRNAs receive only 3'-terminal CCA, unstable tRNAs are marked with CCACCA and rapidly degraded. The chain is CCA-adding enzyme from Staphylococcus haemolyticus (strain JCSC1435).